The primary structure comprises 383 residues: UDP-N-acetylenolpyruvoylglucosamine reductase (383 aa).

Positions 1–13 are enriched in basic and acidic residues; the sequence is MRTRRDVPADRSG. Residues 1–26 form a disordered region; that stretch reads MRTRRDVPADRSGRSRVSRHPGLSVP. The FAD-binding PCMH-type domain maps to 49-215; the sequence is LGGPATRLLT…LRVRFELENA (167 aa). The active site involves Arg192. Ser271 functions as the Proton donor in the catalytic mechanism. Residue Glu375 is part of the active site.

The protein belongs to the MurB family. FAD serves as cofactor.

The protein localises to the cytoplasm. It catalyses the reaction UDP-N-acetyl-alpha-D-muramate + NADP(+) = UDP-N-acetyl-3-O-(1-carboxyvinyl)-alpha-D-glucosamine + NADPH + H(+). It functions in the pathway cell wall biogenesis; peptidoglycan biosynthesis. Cell wall formation. The chain is UDP-N-acetylenolpyruvoylglucosamine reductase from Streptomyces coelicolor (strain ATCC BAA-471 / A3(2) / M145).